The following is a 449-amino-acid chain: tRNA modification GTPase MnmE (449 aa).

Arginine 24, glutamate 85, and arginine 124 together coordinate (6S)-5-formyl-5,6,7,8-tetrahydrofolate. A TrmE-type G domain is found at 220–369 (GIRTAIAGPP…LEEAIIQAFS (150 aa)). Position 230 (asparagine 230) interacts with K(+). GTP-binding positions include 230-235 (NVGKSS), 249-255 (SNIAGTT), and 274-277 (DTAG). Residue serine 234 participates in Mg(2+) binding. K(+) is bound by residues serine 249, isoleucine 251, and threonine 254. Residue threonine 255 coordinates Mg(2+). Lysine 449 is a (6S)-5-formyl-5,6,7,8-tetrahydrofolate binding site.

This sequence belongs to the TRAFAC class TrmE-Era-EngA-EngB-Septin-like GTPase superfamily. TrmE GTPase family. As to quaternary structure, homodimer. Heterotetramer of two MnmE and two MnmG subunits. K(+) serves as cofactor.

It is found in the cytoplasm. Its function is as follows. Exhibits a very high intrinsic GTPase hydrolysis rate. Involved in the addition of a carboxymethylaminomethyl (cmnm) group at the wobble position (U34) of certain tRNAs, forming tRNA-cmnm(5)s(2)U34. This is tRNA modification GTPase MnmE from Akkermansia muciniphila (strain ATCC BAA-835 / DSM 22959 / JCM 33894 / BCRC 81048 / CCUG 64013 / CIP 107961 / Muc).